Reading from the N-terminus, the 245-residue chain is P2Y purinoceptor 13 (245 aa).

The Extracellular segment spans residues 1-9 (QLRAFVCRL). Residues C7 and C85 are joined by a disulfide bond. The helical transmembrane segment at 10 to 30 (SSVIFYETMYVGIVLLGLIAF) threads the bilayer. Over 31-35 (DRFLK) the chain is Cytoplasmic. Residues 36-56 (IIRPLRNIFLKKTVFAKTVSV) form a helical membrane-spanning segment. The Extracellular portion of the chain corresponds to 57-85 (FIWSFFFFISLPNMILSNKEATPSSVKKC). Residues 86–106 (ASLKGPLGLKWHQIVNNISQF) form a helical membrane-spanning segment. Topologically, residues 107-126 (IFWTVFVLMLVFYVVIAKKV) are cytoplasmic. A helical transmembrane segment spans residues 127-147 (YDSYRKSKSKDRKNNKKLEGK). Topologically, residues 148–174 (VFVVVAVFFVCFAPFHFTRVPYTYSQT) are extracellular. Residues 175 to 195 (NNKTDCRLQNQLFIAKETTLF) traverse the membrane as a helical segment. The Cytoplasmic portion of the chain corresponds to 196 to 245 (LAATNICMDPLIYIFLCKKFTEKLPCMRGRKTIASSQENQSSQTDNITLG).

It belongs to the G-protein coupled receptor 1 family.

Its subcellular location is the cell membrane. Functionally, receptor for ADP. Coupled to G(i)-proteins. May play a role in hematopoiesis and the immune system. In Macaca fascicularis (Crab-eating macaque), this protein is P2Y purinoceptor 13 (P2RY13).